A 100-amino-acid chain; its full sequence is UPF0213 protein YhbQ (100 aa).

Residues 2-77 (TPWYLYLIRT…KQLTKRQKER (76 aa)) enclose the GIY-YIG domain.

The protein belongs to the UPF0213 family.

This chain is UPF0213 protein YhbQ, found in Salmonella choleraesuis (strain SC-B67).